We begin with the raw amino-acid sequence, 495 residues long: Pleckstrin homology domain-containing family O member 2 (495 aa).

Residues 18-120 (TADKAGWIKK…WIKALNEGIN (103 aa)) enclose the PH domain. Serine 165 and serine 168 each carry phosphoserine. Residues 171–411 (LSRLDLDVPD…ESPQHPRLPK (241 aa)) form a disordered region. The segment covering 198-213 (QEPPRALMPPVKPSPG) has biased composition (pro residues). Threonine 233 is subject to Phosphothreonine. Residues 235–244 (DSASSGANPE) are compositionally biased toward polar residues. Serine 236, serine 238, serine 239, serine 274, and serine 292 each carry phosphoserine. Threonine 296 is modified (phosphothreonine). Positions 324–335 (SGVDASGSSQSS) are enriched in low complexity. The segment covering 336 to 350 (EAPETTSPEPTQVSV) has biased composition (polar residues). Serine 395 carries the phosphoserine modification. Basic and acidic residues predominate over residues 399 to 411 (LLRESPQHPRLPK). Positions 444-469 (CAESLLSQAVEQLRQATQVLQEMRDL) form a coiled coil.

The sequence is that of Pleckstrin homology domain-containing family O member 2 (Plekho2) from Mus musculus (Mouse).